Consider the following 151-residue polypeptide: UPF0178 protein YaiI (151 aa).

The protein belongs to the UPF0178 family.

In Salmonella enteritidis PT4 (strain P125109), this protein is UPF0178 protein YaiI.